Here is a 354-residue protein sequence, read N- to C-terminus: Ferredoxin--NADP reductase, chloroplastic (354 aa).

The transit peptide at 1–35 directs the protein to the chloroplast; sequence MASLRKPSNHADRACSRRLRVATRVAGRRMCRPVA. The region spanning 69–198 is the FAD-binding FR-type domain; sequence KAPFKAKVRS…TGPTGKVLLL (130 aa). An N6,N6,N6-trimethyllysine mark is found at lysine 118 and lysine 124. FAD-binding positions include 130-133, 151-153, and tyrosine 157; these read RLYS and CVR. Positions 133 and 153 each coordinate NADP(+). Lysine 170 is modified (N6,N6-dimethyllysine). Residues 172-174 and threonine 213 contribute to the FAD site; that span reads LCS. NADP(+) contacts are provided by residues threonine 213, 245–246, 275–276, lysine 285, 313–314, and glutamate 352; these read VG, SR, and GL.

It belongs to the ferredoxin--NADP reductase type 1 family. It depends on FAD as a cofactor.

It localises to the plastid. The protein localises to the chloroplast stroma. Its subcellular location is the chloroplast thylakoid membrane. It carries out the reaction 2 reduced [2Fe-2S]-[ferredoxin] + NADP(+) + H(+) = 2 oxidized [2Fe-2S]-[ferredoxin] + NADPH. The protein operates within energy metabolism; photosynthesis. Functionally, may play a key role in regulating the relative amounts of cyclic and non-cyclic electron flow to meet the demands of the plant for ATP and reducing power. This is Ferredoxin--NADP reductase, chloroplastic (PETH) from Chlamydomonas reinhardtii (Chlamydomonas smithii).